Here is a 101-residue protein sequence, read N- to C-terminus: Urease subunit beta (101 aa).

This sequence belongs to the urease beta subunit family. In terms of assembly, heterotrimer of UreA (gamma), UreB (beta) and UreC (alpha) subunits. Three heterotrimers associate to form the active enzyme.

The protein localises to the cytoplasm. It carries out the reaction urea + 2 H2O + H(+) = hydrogencarbonate + 2 NH4(+). It participates in nitrogen metabolism; urea degradation; CO(2) and NH(3) from urea (urease route): step 1/1. This Jannaschia sp. (strain CCS1) protein is Urease subunit beta.